We begin with the raw amino-acid sequence, 298 residues long: GPN-loop GTPase QQT1 (298 aa).

Position 12–17 (12–17) interacts with GTP; sequence GSGKTT. Positions 69–71 match the Gly-Pro-Asn (GPN)-loop; involved in dimer interface motif; it reads GPN. Residue 173–176 coordinates GTP; sequence SKID.

It belongs to the GPN-loop GTPase family. As to quaternary structure, heterodimer with QQT2. In terms of tissue distribution, expressed in vascular tissues, root tips, apical and root meristematic regions, and floral primordia.

It localises to the cytoplasm. The protein resides in the nucleus. It is found in the cytoskeleton. The protein localises to the spindle. Its subcellular location is the phragmoplast. Its function is as follows. Small GTPase that is essential for the correct formation of the tangential divisions in early embryos. Associates with microtubule during mitosis and may function in the positioning of the division plane. May participate in the patterning of the early embryo at the octant-dermatogen transition. Is crucial for normal development of the plant. The protein is GPN-loop GTPase QQT1 of Arabidopsis thaliana (Mouse-ear cress).